A 245-amino-acid polypeptide reads, in one-letter code: Geranylgeranylglyceryl phosphate synthase (245 aa).

Residues Asp20 and Ser50 each contribute to the Mg(2+) site. Residues 169-175 (YLEAGSG), 202-203 (GG), and 224-225 (GT) each bind sn-glycerol 1-phosphate.

Belongs to the GGGP/HepGP synthase family. Group II subfamily. Mg(2+) serves as cofactor.

Its subcellular location is the cytoplasm. It carries out the reaction sn-glycerol 1-phosphate + (2E,6E,10E)-geranylgeranyl diphosphate = sn-3-O-(geranylgeranyl)glycerol 1-phosphate + diphosphate. It functions in the pathway membrane lipid metabolism; glycerophospholipid metabolism. Its function is as follows. Prenyltransferase that catalyzes the transfer of the geranylgeranyl moiety of geranylgeranyl diphosphate (GGPP) to the C3 hydroxyl of sn-glycerol-1-phosphate (G1P). This reaction is the first ether-bond-formation step in the biosynthesis of archaeal membrane lipids. The protein is Geranylgeranylglyceryl phosphate synthase of Ignicoccus hospitalis (strain KIN4/I / DSM 18386 / JCM 14125).